The primary structure comprises 359 residues: 4-hydroxy-2-oxovalerate aldolase 1 (359 aa).

Residues 23-275 enclose the Pyruvate carboxyltransferase domain; that stretch reads VRVTDTSLRD…KTGIDFFDIA (253 aa). 31 to 32 is a substrate binding site; that stretch reads RD. Position 32 (D32) interacts with Mn(2+). The Proton acceptor role is filled by H35. The substrate site is built by S185 and H214. Residues H214 and H216 each coordinate Mn(2+). Y305 contacts substrate.

It belongs to the 4-hydroxy-2-oxovalerate aldolase family.

It carries out the reaction (S)-4-hydroxy-2-oxopentanoate = acetaldehyde + pyruvate. This is 4-hydroxy-2-oxovalerate aldolase 1 from Mycobacteroides abscessus (strain ATCC 19977 / DSM 44196 / CCUG 20993 / CIP 104536 / JCM 13569 / NCTC 13031 / TMC 1543 / L948) (Mycobacterium abscessus).